We begin with the raw amino-acid sequence, 165 residues long: Small ribosomal subunit protein uS5 (165 aa).

An S5 DRBM domain is found at 10 to 73 (LKEKVVSISR…EDAKKNLVEV (64 aa)).

Belongs to the universal ribosomal protein uS5 family. In terms of assembly, part of the 30S ribosomal subunit. Contacts proteins S4 and S8.

Its function is as follows. With S4 and S12 plays an important role in translational accuracy. Located at the back of the 30S subunit body where it stabilizes the conformation of the head with respect to the body. This is Small ribosomal subunit protein uS5 from Clostridium perfringens (strain ATCC 13124 / DSM 756 / JCM 1290 / NCIMB 6125 / NCTC 8237 / Type A).